We begin with the raw amino-acid sequence, 321 residues long: Aspartate carbamoyltransferase catalytic subunit (321 aa).

Positions 57 and 58 each coordinate carbamoyl phosphate. Lys-85 provides a ligand contact to L-aspartate. Residues Arg-107, His-142, and Gln-145 each contribute to the carbamoyl phosphate site. 2 residues coordinate L-aspartate: Arg-175 and Arg-229. Residues Gly-270 and Pro-271 each coordinate carbamoyl phosphate.

The protein belongs to the aspartate/ornithine carbamoyltransferase superfamily. ATCase family. As to quaternary structure, heterododecamer (2C3:3R2) of six catalytic PyrB chains organized as two trimers (C3), and six regulatory PyrI chains organized as three dimers (R2).

It catalyses the reaction carbamoyl phosphate + L-aspartate = N-carbamoyl-L-aspartate + phosphate + H(+). Its pathway is pyrimidine metabolism; UMP biosynthesis via de novo pathway; (S)-dihydroorotate from bicarbonate: step 2/3. In terms of biological role, catalyzes the condensation of carbamoyl phosphate and aspartate to form carbamoyl aspartate and inorganic phosphate, the committed step in the de novo pyrimidine nucleotide biosynthesis pathway. This chain is Aspartate carbamoyltransferase catalytic subunit, found in Mycobacterium leprae (strain TN).